The primary structure comprises 354 residues: Rhodopsin (354 aa).

The Extracellular segment spans residues 1–36 (MNGTEGPYFYIPMVNTTGIVRSPYDYPQYYLVNPAA). Residues Asn2 and Asn15 are each glycosylated (N-linked (GlcNAc...) asparagine). The chain crosses the membrane as a helical span at residues 37-61 (YAALGAYMFFLILVGFPINFLTLYV). Over 62–73 (TIEHKKLRTPLN) the chain is Cytoplasmic. A helical transmembrane segment spans residues 74–96 (YILLNLAVANLFMVFGGFTTTMY). The Extracellular segment spans residues 97–110 (TSMHGYFVLGRLGC). An intrachain disulfide couples Cys110 to Cys187. Residues 111–133 (NLEGFFATLGGEIALWSLVVLAV) form a helical membrane-spanning segment. The short motif at 134-136 (ERW) is the 'Ionic lock' involved in activated form stabilization element. The Cytoplasmic segment spans residues 134–152 (ERWMVVCKPISNFRFGENH). A helical membrane pass occupies residues 153–173 (AIMGLAMTWLMASACAVPPLV). Topologically, residues 174-202 (GWSRYIPEGMQCSCGVDYYTRAEGFNNES) are extracellular. N-linked (GlcNAc...) asparagine glycosylation occurs at Asn200. A helical transmembrane segment spans residues 203–224 (FVVYMFCCHFMIPLIIVFFCYG). Topologically, residues 225–252 (RLLCAVKEAAAAQQESETTQRAEREVTR) are cytoplasmic. The helical transmembrane segment at 253–274 (MVVIMVIAFLVCWLPYASVAWW) threads the bilayer. The Extracellular portion of the chain corresponds to 275–286 (IFTHQGSEFGPV). A helical membrane pass occupies residues 287 to 308 (FMTIPAFFAKSSSIYNPMIYIC). Lys296 is modified (N6-(retinylidene)lysine). Over 309-354 (MNKQFRNCMITTLCCGKNPFEEEEGASSTASKTEASSVSSSSVSPA) the chain is Cytoplasmic. Residues Cys322 and Cys323 are each lipidated (S-palmitoyl cysteine). Positions 329-354 (EEEEGASSTASKTEASSVSSSSVSPA) are disordered. Low complexity predominate over residues 334–354 (ASSTASKTEASSVSSSSVSPA).

It belongs to the G-protein coupled receptor 1 family. Opsin subfamily. In terms of processing, phosphorylated on some or all of the serine and threonine residues present in the C-terminal region. Post-translationally, contains one covalently linked retinal chromophore.

It localises to the membrane. Its subcellular location is the cell projection. The protein resides in the cilium. The protein localises to the photoreceptor outer segment. Its function is as follows. Photoreceptor required for image-forming vision at low light intensity. While most salt water fish species use retinal as chromophore, most freshwater fish use 3-dehydroretinal, or a mixture of retinal and 3-dehydroretinal. Light-induced isomerization of 11-cis to all-trans retinal triggers a conformational change that activates signaling via G-proteins. Subsequent receptor phosphorylation mediates displacement of the bound G-protein alpha subunit by arrestin and terminates signaling. This Mullus surmuletus (Striped red mullet) protein is Rhodopsin (rho).